A 295-amino-acid chain; its full sequence is Probable adenylate kinase 6, chloroplastic (295 aa).

The N-terminal 46 residues, 1 to 46 (MAVSHRLLRPATTTIKNTFSSLFIRSLSSSSSGSSLDPKIDLEEAA), are a transit peptide targeting the chloroplast. 74–79 (GVGKGT) is an ATP binding site. Positions 94 to 123 (ATGDLVREELSSSGLLSSQLKELVNHGKLV) are NMP. AMP-binding positions include T95, R100, 121 to 123 (KLV), 151 to 154 (GFPR), and Q158. The LID stretch occupies residues 187 to 235 (GRRICSECGGNYNVACIDIKGDDDTPRMYMPPLLPPPNCESKLISRADD). R188 provides a ligand contact to ATP. Residue R243 participates in AMP binding. Residue G271 coordinates ATP.

It belongs to the adenylate kinase family. In terms of assembly, monomer.

The protein localises to the plastid. It localises to the chloroplast. The enzyme catalyses AMP + ATP = 2 ADP. Functionally, catalyzes the reversible transfer of the terminal phosphate group between ATP and AMP. Plays an important role in cellular energy homeostasis and in adenine nucleotide metabolism. The chain is Probable adenylate kinase 6, chloroplastic from Arabidopsis thaliana (Mouse-ear cress).